Consider the following 206-residue polypeptide: uncharacterized protein (206 aa).

A helical membrane pass occupies residues 4–24; that stretch reads LLVVIAVALFIAAIVVLVVAI.

Its subcellular location is the membrane. This is an uncharacterized protein from Mycobacterium tuberculosis (strain CDC 1551 / Oshkosh).